Here is a 510-residue protein sequence, read N- to C-terminus: 2,3-bisphosphoglycerate-independent phosphoglycerate mutase (510 aa).

The Mn(2+) site is built by Asp-16 and Ser-66. Ser-66 functions as the Phosphoserine intermediate in the catalytic mechanism. Substrate contacts are provided by residues His-127, 156–157 (RD), Arg-186, Arg-192, 257–260 (RADR), and Lys-333. Mn(2+) contacts are provided by Asp-400, His-404, Asp-441, His-442, and His-460.

The protein belongs to the BPG-independent phosphoglycerate mutase family. Monomer. It depends on Mn(2+) as a cofactor.

The catalysed reaction is (2R)-2-phosphoglycerate = (2R)-3-phosphoglycerate. Its pathway is carbohydrate degradation; glycolysis; pyruvate from D-glyceraldehyde 3-phosphate: step 3/5. In terms of biological role, catalyzes the interconversion of 2-phosphoglycerate and 3-phosphoglycerate. This is 2,3-bisphosphoglycerate-independent phosphoglycerate mutase from Gluconobacter oxydans (strain 621H) (Gluconobacter suboxydans).